A 524-amino-acid polypeptide reads, in one-letter code: MANINMADTAPSCDTYLLFNGETLLPNGVRAFIYTVVLAYCFIGLSAISGRFFKSMESIMRHSREVVTIDPHTNATIVKHEKVWNYTIADVALLAFGTSFPQISLATIDAIRNLGQLTAGGLGPGTLVGSAAFDLFPIHAVCVVMPRAGSKKKISDLGVWLVELFWSFWAYIWLYIILEVWTPRVITLWEALLTVLQYGLLLLHAYAQDKRWPYVSIPLARGDRPEDWVPTEDASVDYDDNYDGIGDILPGQNEDIVDIFSARSYSNEGYHHVSEKDVEESPTGLTLKNKWEDTHWFSIWWQQFVDAATLESSVSRKMDSTCLSVIGISWNLIIAPWKMLFAFIPPYEIAHGWIAFICSLIFISGIAYGVTKITDQISCVTGVSPYVIAFTALAAGTSWPDLVASKIAAERQITADSAIANITCSNSVNIYVGIGVPWLVDTMYNYLFVYKKPLYIDNAAGLSFSLLVFFATSFGCITVLVLRRVILGAELGGPRMWAWATSVYFMILWVVFVVLSSLRISGVI.

11 helical membrane-spanning segments follow: residues 28-48 (GVRAFIYTVVLAYCFIGLSAI), 88-108 (IADVALLAFGTSFPQISLATI), 125-145 (GTLVGSAAFDLFPIHAVCVVM), 157-177 (LGVWLVELFWSFWAYIWLYII), 185-205 (VITLWEALLTVLQYGLLLLHA), 325-345 (VIGISWNLIIAPWKMLFAFIP), 349-369 (IAHGWIAFICSLIFISGIAYG), 377-397 (ISCVTGVSPYVIAFTALAAGT), 430-450 (IYVGIGVPWLVDTMYNYLFVY), 462-482 (LSFSLLVFFATSFGCITVLVL), and 496-516 (MWAWATSVYFMILWVVFVVLS).

The protein belongs to the Ca(2+):cation antiporter (CaCA) (TC 2.A.19) family. MHX subfamily.

The protein localises to the vacuole membrane. Vacuolar transporter that exchanges protons with Mg(2+), Zn(2+) and Fe(2+) ions. May control the partitioning of Mg(2+) and Zn(2+) between plant organs. The chain is Magnesium/proton exchanger 2 (MHX2) from Oryza sativa subsp. japonica (Rice).